We begin with the raw amino-acid sequence, 374 residues long: MSETLNLLKQLIERPSITPNDAGCQTILIDRLKSVGFQCEHLPFGEVHNFWAWHGHQSPFIIFAGHTDVVPPGDETQWHSPPFTPTEKNGYIYGRGAADMKSGLAAMVVAAENFVKQNPDHNGTIGFIVTSDEEGPAENGTQKVVDYLQQKNIKLDYCIVGEASSNEKLGDAIKIGRRGSMHGELTIIGKQGHIAYPHLADNPIHRSFQAFEALAKTKWDEGNEHFTPTSFQFYNVEAGAGAANVIPATLKAKFNFRFAPIHTTQQLQQKVERILNYYQLNYDIQWNVSSQPFFSGNGRLATFVRQAIQEICHLNTEPNTYGGTSDGRFIATTGCEVIELGPVNKTAHHVNENICIADLEKLTDIYFRTLQLLI.

Residue histidine 66 participates in Zn(2+) binding. Aspartate 68 is a catalytic residue. Residue aspartate 99 participates in Zn(2+) binding. Glutamate 133 functions as the Proton acceptor in the catalytic mechanism. Residues glutamate 134, glutamate 162, and histidine 348 each contribute to the Zn(2+) site.

Belongs to the peptidase M20A family. DapE subfamily. Homodimer. It depends on Zn(2+) as a cofactor. Co(2+) is required as a cofactor.

The catalysed reaction is N-succinyl-(2S,6S)-2,6-diaminopimelate + H2O = (2S,6S)-2,6-diaminopimelate + succinate. It participates in amino-acid biosynthesis; L-lysine biosynthesis via DAP pathway; LL-2,6-diaminopimelate from (S)-tetrahydrodipicolinate (succinylase route): step 3/3. Catalyzes the hydrolysis of N-succinyl-L,L-diaminopimelic acid (SDAP), forming succinate and LL-2,6-diaminopimelate (DAP), an intermediate involved in the bacterial biosynthesis of lysine and meso-diaminopimelic acid, an essential component of bacterial cell walls. This is Succinyl-diaminopimelate desuccinylase from Coxiella burnetii (strain RSA 331 / Henzerling II).